The sequence spans 463 residues: Elongation factor 1-alpha (463 aa).

The tr-type G domain occupies 5 to 242; the sequence is KTHINIVVIG…DAILPPARPT (238 aa). Positions 14-21 are G1; sequence GHVDSGKS. Residue 14 to 21 participates in GTP binding; it reads GHVDSGKS. Residues 70-74 form a G2 region; sequence GITID. Residues 91–94 are G3; the sequence is DAPG. Residues 91 to 95 and 153 to 156 contribute to the GTP site; these read DAPGH and NKMD. The segment at 153 to 156 is G4; it reads NKMD. Residues 194 to 196 form a G5 region; it reads SGW. 2 positions are modified to 5-glutamyl glycerylphosphorylethanolamine: E301 and E374.

Belongs to the TRAFAC class translation factor GTPase superfamily. Classic translation factor GTPase family. EF-Tu/EF-1A subfamily.

The protein localises to the cytoplasm. Its function is as follows. This protein promotes the GTP-dependent binding of aminoacyl-tRNA to the A-site of ribosomes during protein biosynthesis. The protein is Elongation factor 1-alpha of Bombyx mori (Silk moth).